Here is an 813-residue protein sequence, read N- to C-terminus: Leucine--tRNA ligase (813 aa).

Positions 41–51 (PYPSGTLHMGH) match the 'HIGH' region motif. The 'KMSKS' region motif lies at 575–579 (KMSKS). Residue lysine 578 participates in ATP binding.

This sequence belongs to the class-I aminoacyl-tRNA synthetase family.

The protein resides in the cytoplasm. The enzyme catalyses tRNA(Leu) + L-leucine + ATP = L-leucyl-tRNA(Leu) + AMP + diphosphate. The polypeptide is Leucine--tRNA ligase (Francisella philomiragia subsp. philomiragia (strain ATCC 25017 / CCUG 19701 / FSC 153 / O#319-036)).